Consider the following 93-residue polypeptide: uncharacterized protein (93 aa).

Residues 41–62 (RSANRIPTTSSTSTSGTIPTTT) form a disordered region. Low complexity predominate over residues 46-62 (IPTTSSTSTSGTIPTTT).

This is an uncharacterized protein from Dictyostelium discoideum (Social amoeba).